Reading from the N-terminus, the 681-residue chain is MSKELAAMGPGASGDGVRTETAPHIALDSRVGLHAYDISVVVIYFVFVIAVGIWSSIRASRGTIGGYFLAGRSMSWWPIGASLMSSNVGSGLFIGLAGTGAAGGLAVGGFEWNATWLLLALGWVFVPVYIAAGVVTMPQYLKKRFGGQRIQVYMSVLSLILYIFTKISTDIFSGALFIQMALGWNLYLSTGILLVVTAVYTIAGGLMAVIYTDALQTVIMVGGALVLMFLGFQDVGWYPGLEQRYRQAIPNVTVPNTTCHLPRPDAFHILRDPVSGDIPWPGLIFGLTVLATWCWCTDQVIVQRSLSAKSLSHAKGGSVLGGYLKILPMFFIVMPGMISRALFPDEVGCVDPDVCQRICGARVGCSNIAYPKLVMALMPVGLRGLMIAVIMAALMSSLTSIFNSSSTLFTIDVWQRFRRKSTEQELMVVGRVFVVFLVVISILWIPIIQSSNSGQLFDYIQAVTSYLAPPITALFLLAIFCKRVTEPGAFWGLVFGLGVGLLRMILEFSYPAPACGEVDRRPAVLKDFHYLYFAILLCGLTAIVIVIVSLCTTPIPEEQLTRLTWWTRNCPLSELEKEAHESTPEISERPAGECPAGGGAAENSSLGQEQPEAPSRSWGKLLWSWFCGLSGTPEQALSPAEKAALEQKLTSIEEEPLWRHVCNINAVLLLAINIFLWGYFA.

The Extracellular segment spans residues 1-36 (MSKELAAMGPGASGDGVRTETAPHIALDSRVGLHAY). The chain crosses the membrane as a helical span at residues 37-57 (DISVVVIYFVFVIAVGIWSSI). The Cytoplasmic portion of the chain corresponds to 58 to 75 (RASRGTIGGYFLAGRSMS). Residues 76 to 98 (WWPIGASLMSSNVGSGLFIGLAG) form a helical membrane-spanning segment. Over 99–114 (TGAAGGLAVGGFEWNA) the chain is Extracellular. The helical transmembrane segment at 115–135 (TWLLLALGWVFVPVYIAAGVV) threads the bilayer. The Cytoplasmic portion of the chain corresponds to 136-157 (TMPQYLKKRFGGQRIQVYMSVL). A helical membrane pass occupies residues 158–178 (SLILYIFTKISTDIFSGALFI). The Extracellular segment spans residues 179–190 (QMALGWNLYLST). The helical transmembrane segment at 191 to 211 (GILLVVTAVYTIAGGLMAVIY) threads the bilayer. Residues 212–217 (TDALQT) are Cytoplasmic-facing. A helical membrane pass occupies residues 218 to 238 (VIMVGGALVLMFLGFQDVGWY). Over 239 to 275 (PGLEQRYRQAIPNVTVPNTTCHLPRPDAFHILRDPVS) the chain is Extracellular. A glycan (N-linked (GlcNAc...) asparagine) is linked at N251. Residues 276 to 296 (GDIPWPGLIFGLTVLATWCWC) traverse the membrane as a helical segment. Residues 297–317 (TDQVIVQRSLSAKSLSHAKGG) lie on the Cytoplasmic side of the membrane. The helical transmembrane segment at 318–338 (SVLGGYLKILPMFFIVMPGMI) threads the bilayer. The Extracellular segment spans residues 339-383 (SRALFPDEVGCVDPDVCQRICGARVGCSNIAYPKLVMALMPVGLR). The chain crosses the membrane as a helical span at residues 384–406 (GLMIAVIMAALMSSLTSIFNSSS). The Cytoplasmic portion of the chain corresponds to 407–427 (TLFTIDVWQRFRRKSTEQELM). The chain crosses the membrane as a helical span at residues 428 to 448 (VVGRVFVVFLVVISILWIPII). The Extracellular portion of the chain corresponds to 449–459 (QSSNSGQLFDY). The chain crosses the membrane as a helical span at residues 460–480 (IQAVTSYLAPPITALFLLAIF). Topologically, residues 481-487 (CKRVTEP) are cytoplasmic. A helical membrane pass occupies residues 488 to 508 (GAFWGLVFGLGVGLLRMILEF). Over 509-530 (SYPAPACGEVDRRPAVLKDFHY) the chain is Extracellular. A helical transmembrane segment spans residues 531–551 (LYFAILLCGLTAIVIVIVSLC). Topologically, residues 552-660 (TTPIPEEQLT…SIEEEPLWRH (109 aa)) are cytoplasmic. Residues 579–591 (AHESTPEISERPA) are compositionally biased toward basic and acidic residues. The disordered stretch occupies residues 579–614 (AHESTPEISERPAGECPAGGGAAENSSLGQEQPEAP). S604 and S605 each carry phosphoserine. A helical transmembrane segment spans residues 661-681 (VCNINAVLLLAINIFLWGYFA).

The protein belongs to the sodium:solute symporter (SSF) (TC 2.A.21) family. In terms of tissue distribution, expressed in the small intestine, kidney and liver.

It localises to the cell membrane. It catalyses the reaction D-mannose(out) + n Na(+)(out) = D-mannose(in) + n Na(+)(in). In terms of biological role, electrogenic Na(+)-coupled sugar symporter that may play a primary role in D-mannose and possibly D-fructose and D-glucose transport at the plasma membrane. Transporter activity is driven by a transmembrane Na(+) electrochemical gradient set by the Na(+)/K(+) pump. Exclusively recognizes sugar substrates having a pyranose ring with an axial hydroxyl group on carbon 2. The chain is Sodium/glucose cotransporter 4 from Homo sapiens (Human).